The chain runs to 255 residues: MYKRNERLNLIRKRVDQYGQVAVKDLAIFLQVTPETVRKDLETLENDKLITRTHGGAIQYNHINKEKSYANKWQKQSQVKERIAKKAALQIKSGEIIVIDGGTTTGRIPQYLNDITQTTIVTNSLKIADELNRAIEEQRIQAEVIMLAGKTNTEQDVVRGHMTNELLQRFKFDKAFISCGSFDTSDCYEFDLEEAHASHIMIQKSQLSYLLADSSKRDAHASYRIDGFSEIDYMISDYAKPQNIEYFNQKHWLQI.

The region spanning 4 to 59 (RNERLNLIRKRVDQYGQVAVKDLAIFLQVTPETVRKDLETLENDKLITRTHGGAIQ) is the HTH deoR-type domain. The segment at residues 21–40 (VAVKDLAIFLQVTPETVRKD) is a DNA-binding region (H-T-H motif).

This is an uncharacterized protein from Staphylococcus epidermidis (strain ATCC 12228 / FDA PCI 1200).